Here is a 448-residue protein sequence, read N- to C-terminus: Phosphoglucosamine mutase (448 aa).

Catalysis depends on Ser101, which acts as the Phosphoserine intermediate. Positions 101, 242, 244, and 246 each coordinate Mg(2+). Ser101 is subject to Phosphoserine.

The protein belongs to the phosphohexose mutase family. Mg(2+) is required as a cofactor. Post-translationally, activated by phosphorylation.

It catalyses the reaction alpha-D-glucosamine 1-phosphate = D-glucosamine 6-phosphate. In terms of biological role, catalyzes the conversion of glucosamine-6-phosphate to glucosamine-1-phosphate. In Nitrobacter winogradskyi (strain ATCC 25391 / DSM 10237 / CIP 104748 / NCIMB 11846 / Nb-255), this protein is Phosphoglucosamine mutase.